The primary structure comprises 147 residues: SPI-1 type 3 secretion system pilotin (147 aa).

The N-terminal stretch at 1 to 15 (MKKFYSCLPVFLLIG) is a signal peptide. Cys-16 is lipidated: N-palmitoyl cysteine. Cys-16 carries the S-diacylglycerol cysteine lipid modification.

The protein belongs to the InvH family.

The protein resides in the cell outer membrane. Involved in the synthesis of the type III secretion system (T3SS), also called injectisome, which is used to inject bacterial effector proteins into eukaryotic host cells. Pilot protein that is required for the proper localization of the secretin InvG/SctC in the outer membrane. Necessary for efficient adherence and entry of these organisms into cultured epithelial cells. In Salmonella typhimurium (strain SL1344), this protein is SPI-1 type 3 secretion system pilotin.